We begin with the raw amino-acid sequence, 226 residues long: Ribosomal RNA small subunit methyltransferase Nep1 (226 aa).

S-adenosyl-L-methionine is bound by residues G176, G181, and 197–202; that span reads IYEESL.

This sequence belongs to the class IV-like SAM-binding methyltransferase superfamily. RNA methyltransferase NEP1 family. As to quaternary structure, homodimer.

The catalysed reaction is a pseudouridine in rRNA + S-adenosyl-L-methionine = an N(1)-methylpseudouridine in rRNA + S-adenosyl-L-homocysteine + H(+). Methyltransferase involved in ribosomal biogenesis. Specifically catalyzes the N1-methylation of the pseudouridine corresponding to position 914 in M.jannaschii 16S rRNA. This chain is Ribosomal RNA small subunit methyltransferase Nep1, found in Methanothrix thermoacetophila (strain DSM 6194 / JCM 14653 / NBRC 101360 / PT) (Methanosaeta thermophila).